A 150-amino-acid polypeptide reads, in one-letter code: Small ribosomal subunit protein eS19 (150 aa).

Belongs to the eukaryotic ribosomal protein eS19 family. Part of the 30S ribosomal subunit.

Functionally, may be involved in maturation of the 30S ribosomal subunit. The sequence is that of Small ribosomal subunit protein eS19 (rps19e) from Pyrococcus abyssi (strain GE5 / Orsay).